A 553-amino-acid polypeptide reads, in one-letter code: Putative transport protein YidE (553 aa).

5 consecutive transmembrane segments (helical) span residues 4–24, 28–48, 65–85, 95–115, and 158–178; these read IALTVSVLALVAVVGLWIGNI, GVGFGIGGVLFGGIIVGHFVD, FGLILFVYTIGIQVGPGFFAS, LFAVLIVIMGGLVTAILHKIF, and MSYAMAYPFGICGILLTMWLM. RCK C-terminal domains lie at 192–276 and 279–361; these read KHES…VIGK and DTSL…VVGN. Helical transmembrane passes span 371-391, 393-413, 437-457, 464-484, 493-513, and 533-553; these read MLPVFIGIGLGVLLGSIPLFV, GFPVALKLGLAGGPLIMALIL, LGIVLFLAVVGLKSGGDFVDT, LSWIGYGIFITAIPLITVGLL, YLTLCGMLAGSMTDPPALAFA, and LVMFLRIITPQLLAVIFWGMG.

This sequence belongs to the AAE transporter (TC 2.A.81) family. YidE subfamily.

Its subcellular location is the cell membrane. The sequence is that of Putative transport protein YidE from Salmonella heidelberg (strain SL476).